A 282-amino-acid polypeptide reads, in one-letter code: Bifunctional protein FolD (282 aa).

Residues 164–166, Ile189, and Ile230 contribute to the NADP(+) site; that span reads GAS.

Belongs to the tetrahydrofolate dehydrogenase/cyclohydrolase family. As to quaternary structure, homodimer.

It catalyses the reaction (6R)-5,10-methylene-5,6,7,8-tetrahydrofolate + NADP(+) = (6R)-5,10-methenyltetrahydrofolate + NADPH. The enzyme catalyses (6R)-5,10-methenyltetrahydrofolate + H2O = (6R)-10-formyltetrahydrofolate + H(+). It participates in one-carbon metabolism; tetrahydrofolate interconversion. Catalyzes the oxidation of 5,10-methylenetetrahydrofolate to 5,10-methenyltetrahydrofolate and then the hydrolysis of 5,10-methenyltetrahydrofolate to 10-formyltetrahydrofolate. This Nitratiruptor sp. (strain SB155-2) protein is Bifunctional protein FolD.